The following is a 498-amino-acid chain: Cystathionine beta-synthase (498 aa).

The tract at residues 1–25 (MSAPEGPSKCTWTPNTTENTPHTTR) is disordered. Low complexity predominate over residues 11–22 (TWTPNTTENTPH). Residue K73 is modified to N6-(pyridoxal phosphate)lysine. Pyridoxal 5'-phosphate-binding positions include N103, 210-214 (GTGGT), and S302. CBS domains follow at residues 374–430 (TLPK…KKAV) and 435–497 (VSKV…SQQK).

The protein belongs to the cysteine synthase/cystathionine beta-synthase family. The cofactor is pyridoxal 5'-phosphate.

The catalysed reaction is L-homocysteine + L-serine = L,L-cystathionine + H2O. It participates in amino-acid biosynthesis; L-cysteine biosynthesis; L-cysteine from L-homocysteine and L-serine: step 1/2. This is Cystathionine beta-synthase (cysB) from Dictyostelium discoideum (Social amoeba).